Consider the following 371-residue polypeptide: MYNETPIKRRPSTRIYVGNVPIGDGAPIAVQSMTNTKTTDVEATIAQIRALEKVGADIVRVSVPTMDAAEAFKLIKQAVNVPLVADIHFDYRIALKVAEYGVDCLRINPGNIGNEERIRSVVECARDHNIPIRIGVNGGSLEKDLMDKYKEPTPQALLESAMRHVDILDRLNFDQFKVSVKASDVFLAVESYRLLAKQIRQPLHLGITEAGGARAGSVKSAVGLGMLLAEGIGDTLRISLAADPVEEIKVGFDILKSLRIRSRGINFIACPSCSRQEFDVISTVNELERRLEDVTTAMDVSIIGCVVNGPGEALVSHIGLTGGHNKSGYYDEGERQKERFDNDNIVDSLEAKIRAKASQMANRIQIKDTTE.

[4Fe-4S] cluster contacts are provided by Cys270, Cys273, Cys305, and Glu312.

It belongs to the IspG family. [4Fe-4S] cluster is required as a cofactor.

The catalysed reaction is (2E)-4-hydroxy-3-methylbut-2-enyl diphosphate + oxidized [flavodoxin] + H2O + 2 H(+) = 2-C-methyl-D-erythritol 2,4-cyclic diphosphate + reduced [flavodoxin]. Its pathway is isoprenoid biosynthesis; isopentenyl diphosphate biosynthesis via DXP pathway; isopentenyl diphosphate from 1-deoxy-D-xylulose 5-phosphate: step 5/6. Functionally, converts 2C-methyl-D-erythritol 2,4-cyclodiphosphate (ME-2,4cPP) into 1-hydroxy-2-methyl-2-(E)-butenyl 4-diphosphate. The protein is 4-hydroxy-3-methylbut-2-en-1-yl diphosphate synthase (flavodoxin) of Shewanella baltica (strain OS223).